Here is a 338-residue protein sequence, read N- to C-terminus: Solute carrier family 35 member G3 (338 aa).

The tract at residues 1–24 (MAGSHPYFNQPDSTHPSPPSAPPS) is disordered. 9 helical membrane-spanning segments follow: residues 37–57 (TSGL…VGPL), 67–87 (LPSL…ALLL), 105–125 (FFCA…VQVV), 160–180 (CGLL…LWTL), 185–205 (TGVY…ALSL), 221–241 (TVAF…LFVL), 250–270 (LLSW…FTCV), 281–301 (LVCA…YYML), and 305–325 (VAPS…IITA). The EamA 1 domain occupies 49–174 (LPAGFVGPLS…CILGLIIIVG (126 aa)). Positions 272–325 (YAVTKAHPALVCAVLHSEVVVALILQYYMLHETVAPSDIVAAGVVLGSIAIITA) constitute an EamA 2 domain.

This sequence belongs to the SLC35G solute transporter family. In terms of tissue distribution, expressed in testis.

The protein resides in the membrane. The protein is Solute carrier family 35 member G3 (SLC35G3) of Homo sapiens (Human).